The following is a 459-amino-acid chain: Cysteine--tRNA ligase (459 aa).

Cys-31 is a binding site for Zn(2+). Positions 33–43 (PTVYYNPHIGN) match the 'HIGH' region motif. Zn(2+) contacts are provided by Cys-216, His-241, and Glu-245. A 'KMSKS' region motif is present at residues 274–278 (KMSKS). Lys-277 serves as a coordination point for ATP.

The protein belongs to the class-I aminoacyl-tRNA synthetase family. In terms of assembly, monomer. Zn(2+) is required as a cofactor.

It is found in the cytoplasm. It carries out the reaction tRNA(Cys) + L-cysteine + ATP = L-cysteinyl-tRNA(Cys) + AMP + diphosphate. This is Cysteine--tRNA ligase from Rickettsia africae (strain ESF-5).